A 1157-amino-acid polypeptide reads, in one-letter code: Probable inactive leucine-rich repeat receptor kinase XIAO (1157 aa).

A signal peptide spans 1–21 (MPPPPRLLFLLVMLLVVAAPG). N58 carries an N-linked (GlcNAc...) asparagine glycan. LRR repeat units lie at residues 101–125 (LVYLEKLSLRSNSLSGTIPASLSRI), 127–149 (SLRAVYLQYNSLSGPIPQSFLAN), 150–172 (LTNLQTFDVSGNLLSGPVPVSFP), 173–196 (PSLKYLDLSSNAFSGTIPANVSAS), 198–220 (TSLQFLNLSFNRLRGTVPASLGT), 221–245 (LQDLHYLWLDGNLLEGTIPSALSNC), 247–269 (ALLHLSLQGNALRGILPPAVAAI), 270–293 (PSLQILSVSRNRLTGAIPAAAFGG), 296–319 (NSSLRIVQVGGNAFSQVDVPVSLG), 320–343 (KDLQVVDLRANKLAGPFPSWLAGA), 344–367 (GGLTVLDLSGNAFTGEVPPAVGQL), 368–391 (TALQELRLGGNAFTGTVPAEIGRC), 393–414 (ALQVLDLEDNRFSGEVPAALGG), 415–439 (LRRLREVYLGGNSFSGQIPASLGNL), 440–463 (SWLEALSTPGNRLTGDLPSELFVL), 464–487 (GNLTFLDLSDNKLAGEIPPSIGNL), 489–511 (ALQSLNLSGNSFSGRIPSNIGNL), 513–536 (NLRVLDLSGQKNLSGNLPAELFGL), 537–559 (PQLQYVSLAGNSFSGDVPEGFSS), 561–583 (WSLRHLNLSVNSFTGSMPATYGY), 584–608 (LPSLQVLSASHNRICGELPVELANC), 609–631 (SNLTVLDLRSNQLTGPIPGDFAR), 632–656 (LGELEELDLSHNQLSRKIPPEISNC), 658–680 (SLVTLKLDDNHLGGEIPASLSNL), 681–704 (SKLQTLDLSSNNLTGSIPASLAQI), and 706–728 (GMLSLNVSQNELSGEIPAMLGSR). An N-linked (GlcNAc...) asparagine glycan is attached at N149. Residues N192, N204, and N244 are each glycosylated (N-linked (GlcNAc...) asparagine). An N-linked (GlcNAc...) asparagine glycan is attached at N296. N-linked (GlcNAc...) asparagine glycosylation is present at N438. 3 N-linked (GlcNAc...) asparagine glycosylation sites follow: N465, N494, and N524. N567, N607, N610, N655, N679, N692, and N711 each carry an N-linked (GlcNAc...) asparagine glycan. A helical transmembrane segment spans residues 765–785 (LALLIGVVAATVLLLVLFCCC). The tract at residues 804–825 (VKKRRRSPGRGSGSSGTSTDSV) is disordered. The Protein kinase domain maps to 849-1144 (FDEENVLSRG…LEGCRVGPDI (296 aa)). ATP-binding positions include 855–863 (LSRGRHGLV), 930–932 (DYM), 936–939 (NLAT), 980–985 (DVKPQN), and D998.

This sequence belongs to the protein kinase superfamily. Ser/Thr protein kinase family. Expressed in developing culm, coleoptile, primary root, young spikelet, young leaf blade and leaf sheath, floral meristem primordia, stamen primordia, and lemma and palea primordia.

The protein resides in the cell membrane. In terms of biological role, functions in the early stages of organ development by regulating cell division rate. Is probably involved in the regulation of a number of cell-cycle genes. May act as regulator of brassinosteroid (BR) signaling and cell-cycle controlling organ growth. The polypeptide is Probable inactive leucine-rich repeat receptor kinase XIAO (Oryza sativa subsp. japonica (Rice)).